The sequence spans 103 residues: Co-chaperonin GroES (103 aa).

It belongs to the GroES chaperonin family. Heptamer of 7 subunits arranged in a ring. Interacts with the chaperonin GroEL.

It is found in the cytoplasm. In terms of biological role, together with the chaperonin GroEL, plays an essential role in assisting protein folding. The GroEL-GroES system forms a nano-cage that allows encapsulation of the non-native substrate proteins and provides a physical environment optimized to promote and accelerate protein folding. GroES binds to the apical surface of the GroEL ring, thereby capping the opening of the GroEL channel. This chain is Co-chaperonin GroES, found in Microcystis aeruginosa (strain NIES-843 / IAM M-2473).